Here is a 1557-residue protein sequence, read N- to C-terminus: ABC transporter atnG (1557 aa).

Transmembrane regions (helical) follow at residues 27–47 (FTLYFEEAFLSIFPAATLILA), 70–90 (LKLLLLAPYSISQLLLLAFWM), 99–119 (LTIASTVLRFIATLPCGYLIH), 131–151 (IISIYFLLTLLFDIPLARTIW), and 159–179 (VSAIFIAGTVVKALLLILETW). N-linked (GlcNAc...) asparagine glycosylation is found at N202 and N249. The next 6 helical transmembrane spans lie at 256–276 (AGAMVVPIAKAFKWDLLAGVF), 311–331 (ATLLIGAYALVYGGIAIATAT), 385–405 (YIHDTWASLIEIGIALYLLYN), 412–432 (IAPIIIAFGCTVTAMKIAMMA), 490–510 (LLIAVVGLSNFNTLMTPIVSF), and 531–551 (LTSLTLFNLFAVFIGTLVESI). An ABC transmembrane type-1 1 domain is found at 279-556 (LCQSGFIISQ…LVESISETAM (278 aa)). The 237-residue stretch at 593–829 (AFEVDVGWKN…LDYIQGFAIA (237 aa)) folds into the ABC transporter 1 domain. Residue 625–632 (GAVGCGKT) participates in ATP binding. N-linked (GlcNAc...) asparagine glycosylation is present at N667. A helical transmembrane segment spans residues 882 to 902 (LVYFGLMAIFVFLQAFPTVWV). One can recognise an ABC transmembrane type-1 2 domain in the interval 882–1162 (LVYFGLMAIF…LITDWTVLET (281 aa)). N916 is a glycosylation site (N-linked (GlcNAc...) asparagine). Helical transmembrane passes span 921–941 (IGVYWMFGVLGACFLLATACF), 996–1016 (AVLQTCLALFLCVAQLIIIAV), 1020–1040 (YITATIPLCVLVYCIIGTFYM), and 1105–1125 (LSLVLDMTVAGFVLVLMGIAV). N1132 is a glycosylation site (N-linked (GlcNAc...) asparagine). Residues 1135-1155 (SLGLALVNVVSLSASVKALIT) form a helical membrane-spanning segment. Residues 1199–1431 (VEYKNVSAFY…PSVFRELYKS (233 aa)) form the ABC transporter 2 domain. N1203 and N1218 each carry an N-linked (GlcNAc...) asparagine glycan. 1233–1240 (GRSGSGKS) is a binding site for ATP. Disordered stretches follow at residues 1439–1464 (ERQERAEAEARRRERVEKERAEEELR) and 1503–1557 (RTRS…RGLH). Positions 1507–1522 (RSRDHSAERRESKRYS) are enriched in basic and acidic residues.

It belongs to the ABC transporter superfamily. ABCC family. Conjugate transporter (TC 3.A.1.208) subfamily.

Its subcellular location is the cell membrane. ABC transporter; part of the gene cluster that mediates the biosynthesis of aspercryptins, linear lipopeptides built from six amino acids including 2 highly unusual and nonproteogenic amino acids, 2-amino-octanoic acid (2aoa) and 2-amino-dodecanol (2adol). In Emericella nidulans (strain FGSC A4 / ATCC 38163 / CBS 112.46 / NRRL 194 / M139) (Aspergillus nidulans), this protein is ABC transporter atnG.